The following is a 108-amino-acid chain: UPF0145 protein alr2488 (108 aa).

Belongs to the UPF0145 family.

The polypeptide is UPF0145 protein alr2488 (Nostoc sp. (strain PCC 7120 / SAG 25.82 / UTEX 2576)).